The primary structure comprises 142 residues: Secreted RxLR effector protein 161 (142 aa).

The N-terminal stretch at 1–27 (MKNVPYLSAVGAIMYLMVVTRPDLAAA) is a signal peptide. A RxLR motif is present at residues 48–51 (RVLR).

Belongs to the RxLR effector family.

It is found in the secreted. Its subcellular location is the host chloroplast envelope. The protein resides in the host nucleus. Secreted effector that completely suppresses the host cell death induced by cell death-inducing proteins. This chain is Secreted RxLR effector protein 161, found in Plasmopara viticola (Downy mildew of grapevine).